The chain runs to 24 residues: Flavin reductase (NADPH) (24 aa).

Positions 9, 11, 12, and 14 each coordinate NADP(+).

It belongs to the BLVRB family. In terms of assembly, monomer. Detected in erythrocytes (at protein level).

It is found in the cytoplasm. The catalysed reaction is reduced riboflavin + NADP(+) = riboflavin + NADPH + 2 H(+). It catalyses the reaction bilirubin IXbeta + NADP(+) = biliverdin IXbeta + NADPH + H(+). The enzyme catalyses FMNH2 + NAD(+) = FMN + NADH + 2 H(+). It carries out the reaction FMNH2 + NADP(+) = FMN + NADPH + 2 H(+). The catalysed reaction is S-nitroso-CoA + L-cysteinyl-[protein] = S-nitroso-L-cysteinyl-[protein] + CoA. It catalyses the reaction L-cysteinyl-[SCAN] + S-nitroso-CoA = S-nitroso-L-cysteinyl-[SCAN] + CoA. The enzyme catalyses S-nitroso-L-cysteinyl-[SCAN] + L-cysteinyl-[protein] = L-cysteinyl-[SCAN] + S-nitroso-L-cysteinyl-[protein]. Enzyme that can both act as a NAD(P)H-dependent reductase and a S-nitroso-CoA-dependent nitrosyltransferase. Promotes fetal heme degradation during development. Also expressed in adult tissues, where it acts as a regulator of hematopoiesis, intermediary metabolism (glutaminolysis, glycolysis, TCA cycle and pentose phosphate pathway) and insulin signaling. Has a broad specificity oxidoreductase activity by catalyzing the NAD(P)H-dependent reduction of a variety of flavins, such as riboflavin, FAD or FMN, biliverdins, methemoglobin and PQQ (pyrroloquinoline quinone). Contributes to fetal heme catabolism by catalyzing reduction of biliverdin IXbeta into bilirubin IXbeta in the liver. Biliverdin IXbeta, which constitutes the major heme catabolite in the fetus is not present in adult. Does not reduce bilirubin IXalpha. Can also reduce the complexed Fe(3+) iron to Fe(2+) in the presence of FMN and NADPH. Acts as a protein nitrosyltransferase by catalyzing nitrosylation of cysteine residues of target proteins, such as HMOX2, INSR and IRS1. S-nitroso-CoA-dependent nitrosyltransferase activity is mediated via a 'ping-pong' mechanism: BLVRB first associates with both S-nitroso-CoA and protein substrate, nitric oxide group is then transferred from S-nitroso-CoA to Cys residues of BLVRB and from S-nitroso-BLVRB to the protein substrate. Inhibits insulin signaling by mediating nitrosylation of INSR and IRS1, leading to their inhibition. The polypeptide is Flavin reductase (NADPH) (BLVRB) (Aquarana catesbeiana (American bullfrog)).